The primary structure comprises 481 residues: MAQSPVSAEVIHQVEECLDEDEKEMMLFLCRDVTENLAAPNVRDLLDSLSERGQLSFATLAELLYRVRRFDLLKRILKTDKATVEDHLRRNPHLVSDYRVLLMEIGESLDQNDVSSLVFLTRDYTGRGKIAKDKSFLDLVIELEKLNLIASDQLNLLEKCLKNIHRIDLNTKIQKYTQSSQGARSNMNTLQASLPKLSIKYNSRLQNGRSKEPRFVEYRDSQRTLVKTSIQESGAFLPPHIREETYRMQSKPLGICLIIDCIGNDTKYLQETFTSLGYHIQLFLFPKSHDITQIVRRYASMAQHQDYDSFACVLVSLGGSQSMMGRDQVHSGFSLDHVKNMFTGDTCPSLRGKPKLFFIQNYESLGSQLEDSSLEVDGPSIKNVDSKPLQPRHCTTHPEADIFWSLCTADVSHLEKPSSSSSVYLQKLSQQLKQGRRRPLVDLHVELMDKVYAWNSGVSSKEKYSLSLQHTLRKKLILAPT.

2 DED domains span residues 6 to 78 (VSAE…RILK) and 97 to 172 (DYRV…LNTK). Residues 6-200 (VSAEVIHQVE…QASLPKLSIK (195 aa)) are interaction with CASP8. The tract at residues 6-229 (VSAEVIHQVE…DSQRTLVKTS (224 aa)) is interaction with FADD. The interaction with CASP8 propeptide stretch occupies residues 6 to 307 (VSAEVIHQVE…YASMAQHQDY (302 aa)). Residues 197 to 436 (LSIKYNSRLQ…KLSQQLKQGR (240 aa)) form an interaction with CASP3 region. Residues 197–481 (LSIKYNSRLQ…LRKKLILAPT (285 aa)) form an interaction with TRAF1 and TRAF2 region. The interval 219 to 481 (RDSQRTLVKT…LRKKLILAPT (263 aa)) is interaction with CASP8 subunits p18 and p10. The interval 265-360 (DTKYLQETFT…RGKPKLFFIQ (96 aa)) is caspase. Residues 372–481 (SSLEVDGPSI…LRKKLILAPT (110 aa)) form an interaction with CASP8 region.

The protein belongs to the peptidase C14A family. TNFRSF6 stimulation triggers recruitment to the death-inducing signaling complex (DISC) formed by TNFRSF6, FADD and CASP8. A proteolytic fragment (p43) stays associated with the DISC. Interacts with RIPK1. Proteolytically processed by CASP8 generating subunits p43 and p12. As to expression, highly expressed in heart.

Apoptosis regulator protein which may function as a crucial link between cell survival and cell death pathways in mammalian cells. Acts as an inhibitor of TNFRSF6 mediated apoptosis. A proteolytic fragment (p43) is likely retained in the death-inducing signaling complex (DISC) thereby blocking further recruitment and processing of caspase-8 at the complex. Full length and shorter isoforms have been shown either to induce apoptosis or to reduce TNFRSF-triggered apoptosis. Lacks enzymatic (caspase) activity. This Mus musculus (Mouse) protein is CASP8 and FADD-like apoptosis regulator (Cflar).